Reading from the N-terminus, the 414-residue chain is Serine hydroxymethyltransferase (414 aa).

(6S)-5,6,7,8-tetrahydrofolate is bound by residues L121 and 125–127 (GHL). K229 bears the N6-(pyridoxal phosphate)lysine mark.

Belongs to the SHMT family. As to quaternary structure, homodimer. Pyridoxal 5'-phosphate is required as a cofactor.

Its subcellular location is the cytoplasm. The enzyme catalyses (6R)-5,10-methylene-5,6,7,8-tetrahydrofolate + glycine + H2O = (6S)-5,6,7,8-tetrahydrofolate + L-serine. The protein operates within one-carbon metabolism; tetrahydrofolate interconversion. Its pathway is amino-acid biosynthesis; glycine biosynthesis; glycine from L-serine: step 1/1. In terms of biological role, catalyzes the reversible interconversion of serine and glycine with tetrahydrofolate (THF) serving as the one-carbon carrier. This reaction serves as the major source of one-carbon groups required for the biosynthesis of purines, thymidylate, methionine, and other important biomolecules. Also exhibits THF-independent aldolase activity toward beta-hydroxyamino acids, producing glycine and aldehydes, via a retro-aldol mechanism. This chain is Serine hydroxymethyltransferase, found in Polynucleobacter asymbioticus (strain DSM 18221 / CIP 109841 / QLW-P1DMWA-1) (Polynucleobacter necessarius subsp. asymbioticus).